We begin with the raw amino-acid sequence, 632 residues long: Phosphoglucomutase, chloroplastic (632 aa).

The N-terminal 72 residues, M1–Q72, are a transit peptide targeting the chloroplast. R97 and S190 together coordinate alpha-D-glucose 1,6-bisphosphate. Residue S190 is the Phosphoserine intermediate of the active site. Mg(2+) contacts are provided by S190, D355, D357, and D359. Phosphoserine is present on S190. 6 residues coordinate alpha-D-glucose 1,6-bisphosphate: D359, R360, T423, E442, S444, and K455.

Belongs to the phosphohexose mutase family. As to quaternary structure, monomer. Mg(2+) is required as a cofactor.

It is found in the plastid. The protein resides in the chloroplast. The enzyme catalyses alpha-D-glucose 1-phosphate = alpha-D-glucose 6-phosphate. It carries out the reaction O-phospho-L-seryl-[protein] + alpha-D-glucose 1-phosphate = alpha-D-glucose 1,6-bisphosphate + L-seryl-[protein]. The catalysed reaction is alpha-D-glucose 1,6-bisphosphate + L-seryl-[protein] = O-phospho-L-seryl-[protein] + alpha-D-glucose 6-phosphate. Inhibited by the Calvin cycle intermediates fructose-1,6-bisphosphate and ribulose-1,5-bisphosphate. Catalyzes the reversible isomerization of alpha-D-glucose 1-phosphate to alpha-D-glucose 6-phosphate. The mechanism proceeds via the intermediate compound alpha-D-glucose 1,6-bisphosphate. This enzyme participates in both the breakdown and synthesis of glucose. Promotes gravitropic responses, negative in shoots but positive in roots, by facilitating starch granules (statoliths) formation. The sequence is that of Phosphoglucomutase, chloroplastic (PGMP) from Solanum tuberosum (Potato).